Here is a 308-residue protein sequence, read N- to C-terminus: tRNA dimethylallyltransferase (308 aa).

14 to 21 (GPTASGKT) is a binding site for ATP. 16–21 (TASGKT) is a binding site for substrate. Interaction with substrate tRNA stretches follow at residues 39–42 (DSAL), 163–167 (QRLSR), and 244–249 (RCVGYR).

This sequence belongs to the IPP transferase family. As to quaternary structure, monomer. Mg(2+) is required as a cofactor.

The enzyme catalyses adenosine(37) in tRNA + dimethylallyl diphosphate = N(6)-dimethylallyladenosine(37) in tRNA + diphosphate. Functionally, catalyzes the transfer of a dimethylallyl group onto the adenine at position 37 in tRNAs that read codons beginning with uridine, leading to the formation of N6-(dimethylallyl)adenosine (i(6)A). This is tRNA dimethylallyltransferase from Shewanella baltica (strain OS223).